The chain runs to 194 residues: Small ribosomal subunit protein uS4c (194 aa).

The tract at residues 13 to 36 (GLTSKRPRSGSDPKNQLRSGKKSQ) is disordered. The S4 RNA-binding domain maps to 82-143 (MRLDNILFRL…KQRSKALIQN (62 aa)).

It belongs to the universal ribosomal protein uS4 family. As to quaternary structure, part of the 30S ribosomal subunit. Contacts protein S5. The interaction surface between S4 and S5 is involved in control of translational fidelity.

The protein resides in the plastid. It is found in the chloroplast. Functionally, one of the primary rRNA binding proteins, it binds directly to 16S rRNA where it nucleates assembly of the body of the 30S subunit. In terms of biological role, with S5 and S12 plays an important role in translational accuracy. The sequence is that of Small ribosomal subunit protein uS4c (rps4) from Moraea spathulata (Large yellow moraea).